The sequence spans 188 residues: Elongation factor P (188 aa).

The residue at position 34 (Lys-34) is an N6-(3,6-diaminohexanoyl)-5-hydroxylysine.

The protein belongs to the elongation factor P family. May be beta-lysylated on the epsilon-amino group of Lys-34 by the combined action of EpmA and EpmB, and then hydroxylated on the C5 position of the same residue by EpmC (if this protein is present). Lysylation is critical for the stimulatory effect of EF-P on peptide-bond formation. The lysylation moiety may extend toward the peptidyltransferase center and stabilize the terminal 3-CCA end of the tRNA. Hydroxylation of the C5 position on Lys-34 may allow additional potential stabilizing hydrogen-bond interactions with the P-tRNA.

It is found in the cytoplasm. Its pathway is protein biosynthesis; polypeptide chain elongation. Its function is as follows. Involved in peptide bond synthesis. Alleviates ribosome stalling that occurs when 3 or more consecutive Pro residues or the sequence PPG is present in a protein, possibly by augmenting the peptidyl transferase activity of the ribosome. Modification of Lys-34 is required for alleviation. The polypeptide is Elongation factor P (Coxiella burnetii (strain CbuG_Q212) (Coxiella burnetii (strain Q212))).